The sequence spans 235 residues: MSDKPNNFPPLPRFIPLKPCFYQDFDTDIPDLHRTTAKRLYYLWMLNSITLGVNLIGCLAWLIGGGSATNFGLAFLWLILFTPCSYVCWFRPIYKAFKTDSSFNFMAFFFTFTAQLVISIIQAVGIPGWGVCGWIASISFFGTNVGSAVVMLIPTIMFTAVAVLSFVALTKVHRFYRGAGGSLSKAQEEWTTGAWKNPHVQQAAQNAAFGATQGAMTQNEPQYSATPNYGYSNEM.

Topologically, residues 1 to 39 (MSDKPNNFPPLPRFIPLKPCFYQDFDTDIPDLHRTTAKR) are cytoplasmic. A helical transmembrane segment spans residues 40–60 (LYYLWMLNSITLGVNLIGCLA). Topologically, residues 61–67 (WLIGGGS) are extracellular. The helical transmembrane segment at 68–88 (ATNFGLAFLWLILFTPCSYVC) threads the bilayer. Over 89 to 102 (WFRPIYKAFKTDSS) the chain is Cytoplasmic. A helical membrane pass occupies residues 103-125 (FNFMAFFFTFTAQLVISIIQAVG). Residues 126-148 (IPGWGVCGWIASISFFGTNVGSA) lie on the Extracellular side of the membrane. Residues 149–169 (VVMLIPTIMFTAVAVLSFVAL) traverse the membrane as a helical segment. The Cytoplasmic segment spans residues 170 to 235 (TKVHRFYRGA…TPNYGYSNEM (66 aa)).

This sequence belongs to the SCAMP family. SCAMP5 subfamily.

Its subcellular location is the cell membrane. The protein resides in the golgi apparatus membrane. It localises to the golgi apparatus. It is found in the trans-Golgi network membrane. The protein localises to the recycling endosome membrane. Its subcellular location is the cytoplasmic vesicle. The protein resides in the secretory vesicle. It localises to the synaptic vesicle membrane. Its function is as follows. Required for the calcium-dependent exocytosis of signal sequence-containing cytokines. Probably acts in cooperation with the SNARE machinery. In Xenopus laevis (African clawed frog), this protein is Secretory carrier-associated membrane protein 5A (scamp5-a).